A 562-amino-acid chain; its full sequence is Protein TBF1 (562 aa).

The tract at residues 376-414 is disordered; sequence ASMSNSSSGPHSSHNNSSNSNNNGSIGLRKPKAKRTWSK. A compositionally biased stretch (low complexity) spans 377–400; the sequence is SMSNSSSGPHSSHNNSSNSNNNGS. Residues 404–460 form the HTH myb-type domain; the sequence is RKPKAKRTWSKEEEEALVEGLKEVGPSWSKILDLYGPGGKITENLKNRTQVQLKDKA. Positions 431–456 form a DNA-binding region, H-T-H motif; that stretch reads WSKILDLYGPGGKITENLKNRTQVQL. The disordered stretch occupies residues 495-562; it reads FSQSPNSSTI…GFDPHLEDGM (68 aa). 2 stretches are compositionally biased toward polar residues: residues 496-522 and 532-552; these read SQSP…ATED and GQNS…SDNT.

In terms of assembly, homodimer.

The protein localises to the nucleus. The protein resides in the chromosome. Its subcellular location is the telomere. Its function is as follows. Binds the telomeric double-stranded TTAGGG repeat and negatively regulates telomere length. Involved in the regulation of gene expression. 52 binding sites have been identified, distributed over 15 chromosomes. A member of the general regulatory factors (GRFs) which act as genome partitioners. Acts as a chromatin insulator which are known as STARs (Subtelomeric anti-silencing region). STARs prevent negative or positive transcription influence by extending across chromatin to a promoter. The chain is Protein TBF1 (TBF1) from Saccharomyces cerevisiae (strain ATCC 204508 / S288c) (Baker's yeast).